Consider the following 406-residue polypeptide: Peptide chain release factor PrfB3, chloroplastic (406 aa).

This sequence belongs to the prokaryotic/mitochondrial release factor family. In terms of assembly, interacts with PDE338.

It is found in the plastid. It localises to the chloroplast stroma. Its subcellular location is the chloroplast. Functionally, involved in the light- and stress-dependent regulation of stability of 3' processed petB transcripts, thus regulating cytochrome b6 accumulation, a rate-limiting step in photosynthetic electron transport. May be recruited to specifically protect petB transcripts against 3'-5' exonucleolytic attack by masking the 3' ends. Does not function as release factor. The polypeptide is Peptide chain release factor PrfB3, chloroplastic (Arabidopsis thaliana (Mouse-ear cress)).